The chain runs to 180 residues: ATP-dependent protease subunit HslV (180 aa).

Thr-7 is an active-site residue. Positions 165, 168, and 171 each coordinate Na(+).

It belongs to the peptidase T1B family. HslV subfamily. A double ring-shaped homohexamer of HslV is capped on each side by a ring-shaped HslU homohexamer. The assembly of the HslU/HslV complex is dependent on binding of ATP.

The protein localises to the cytoplasm. The enzyme catalyses ATP-dependent cleavage of peptide bonds with broad specificity.. Allosterically activated by HslU binding. Protease subunit of a proteasome-like degradation complex believed to be a general protein degrading machinery. This chain is ATP-dependent protease subunit HslV, found in Bacillus cytotoxicus (strain DSM 22905 / CIP 110041 / 391-98 / NVH 391-98).